Consider the following 554-residue polypeptide: Glucose-6-phosphate isomerase (554 aa).

Glu-359 serves as the catalytic Proton donor. Active-site residues include His-390 and Lys-518.

It belongs to the GPI family.

The protein localises to the cytoplasm. It carries out the reaction alpha-D-glucose 6-phosphate = beta-D-fructose 6-phosphate. The protein operates within carbohydrate biosynthesis; gluconeogenesis. It functions in the pathway carbohydrate degradation; glycolysis; D-glyceraldehyde 3-phosphate and glycerone phosphate from D-glucose: step 2/4. Functionally, catalyzes the reversible isomerization of glucose-6-phosphate to fructose-6-phosphate. This is Glucose-6-phosphate isomerase from Pseudomonas putida (strain W619).